Reading from the N-terminus, the 178-residue chain is MRIDAISIGKNVPQDVNVIIEVPVGGEPIKYEMDKEAGTLVVDRFLYTPMRYPGNYGFIPHTLSDDGDPCDVLIINTRAIIPGAVMSVRPVGVLFMEDEAGGDEKILAVPSSKLTQRYDKVKSYSDLPDITLQQIQHFFEHYKDLEKGKWVKILRWGGPEDAHKLILEGIEREKKKKG.

Positions 30, 44, and 56 each coordinate substrate. The Mg(2+) site is built by D66, D71, and D103. Y142 lines the substrate pocket.

This sequence belongs to the PPase family. As to quaternary structure, homohexamer. Requires Mg(2+) as cofactor.

It localises to the cytoplasm. The enzyme catalyses diphosphate + H2O = 2 phosphate + H(+). In terms of biological role, catalyzes the hydrolysis of inorganic pyrophosphate (PPi) forming two phosphate ions. The chain is Inorganic pyrophosphatase from Bradyrhizobium diazoefficiens (strain JCM 10833 / BCRC 13528 / IAM 13628 / NBRC 14792 / USDA 110).